Consider the following 246-residue polypeptide: 4-hydroxy-tetrahydrodipicolinate reductase (246 aa).

9 to 14 (GNTGRM) serves as a coordination point for NAD(+). Position 36 (Arg36) interacts with NADP(+). Residues 78–80 (GTT) and 104–107 (SPNM) each bind NAD(+). His137 (proton donor/acceptor) is an active-site residue. A (S)-2,3,4,5-tetrahydrodipicolinate-binding site is contributed by His138. Catalysis depends on Lys141, which acts as the Proton donor. Residue 147 to 148 (GT) participates in (S)-2,3,4,5-tetrahydrodipicolinate binding.

Belongs to the DapB family.

Its subcellular location is the cytoplasm. The enzyme catalyses (S)-2,3,4,5-tetrahydrodipicolinate + NAD(+) + H2O = (2S,4S)-4-hydroxy-2,3,4,5-tetrahydrodipicolinate + NADH + H(+). It carries out the reaction (S)-2,3,4,5-tetrahydrodipicolinate + NADP(+) + H2O = (2S,4S)-4-hydroxy-2,3,4,5-tetrahydrodipicolinate + NADPH + H(+). It functions in the pathway amino-acid biosynthesis; L-lysine biosynthesis via DAP pathway; (S)-tetrahydrodipicolinate from L-aspartate: step 4/4. Catalyzes the conversion of 4-hydroxy-tetrahydrodipicolinate (HTPA) to tetrahydrodipicolinate. The chain is 4-hydroxy-tetrahydrodipicolinate reductase from Chlamydia muridarum (strain MoPn / Nigg).